The chain runs to 139 residues: Arsenate reductase (139 aa).

Active-site nucleophile residues include Cys-10, Cys-82, and Cys-89. 2 disulfide bridges follow: Cys-10/Cys-82 and Cys-82/Cys-89.

The protein belongs to the low molecular weight phosphotyrosine protein phosphatase family. Thioredoxin-coupled ArsC subfamily. As to quaternary structure, monomer.

The protein resides in the cytoplasm. It catalyses the reaction arsenate + [thioredoxin]-dithiol + H(+) = arsenite + [thioredoxin]-disulfide + H2O. Its activity is regulated as follows. Activity is potassium and sulfate-independent. In terms of biological role, catalyzes the reduction of arsenate [As(V)] to arsenite [As(III)]. In vitro, can dephosphorylate para-nitrophenyl phosphate (pNPP). This chain is Arsenate reductase, found in Bacillus subtilis (strain 168).